Consider the following 412-residue polypeptide: Gamma-glutamyl phosphate reductase (412 aa).

Belongs to the gamma-glutamyl phosphate reductase family.

The protein resides in the cytoplasm. The catalysed reaction is L-glutamate 5-semialdehyde + phosphate + NADP(+) = L-glutamyl 5-phosphate + NADPH + H(+). The protein operates within amino-acid biosynthesis; L-proline biosynthesis; L-glutamate 5-semialdehyde from L-glutamate: step 2/2. Functionally, catalyzes the NADPH-dependent reduction of L-glutamate 5-phosphate into L-glutamate 5-semialdehyde and phosphate. The product spontaneously undergoes cyclization to form 1-pyrroline-5-carboxylate. This chain is Gamma-glutamyl phosphate reductase, found in Bartonella henselae (strain ATCC 49882 / DSM 28221 / CCUG 30454 / Houston 1) (Rochalimaea henselae).